The chain runs to 500 residues: Probable malate:quinone oxidoreductase (500 aa).

This sequence belongs to the MQO family. It depends on FAD as a cofactor.

The enzyme catalyses (S)-malate + a quinone = a quinol + oxaloacetate. The protein operates within carbohydrate metabolism; tricarboxylic acid cycle; oxaloacetate from (S)-malate (quinone route): step 1/1. The polypeptide is Probable malate:quinone oxidoreductase (Bacillus thuringiensis (strain Al Hakam)).